A 184-amino-acid chain; its full sequence is Fungal defensin copsin (184 aa).

An N-terminal signal peptide occupies residues 1–23 (MKLSTSLLAIVAVASTFIGNALS). Positions 24–127 (ATTVPGCFAE…LGRVLPVEKR (104 aa)) are excised as a propeptide. At glutamine 128 the chain carries Pyrrolidone carboxylic acid. Cystine bridges form between cysteine 130–cysteine 159, cysteine 137–cysteine 167, cysteine 145–cysteine 175, cysteine 149–cysteine 177, cysteine 152–cysteine 184, and cysteine 162–cysteine 181.

Belongs to the invertebrate defensin family. Post-translationally, contains a unique connectivity of 6 cysteine bonds in contrast to most other CS-alpha-beta defensins which are linked by 3 or 4 disulfide bonds. Disulfide bonds are essential for structural integrity and antibacterial activity, since activity is lost after treatment with reducing agents. Thanks to disulfide bonds and N-terminal pyroglutamate, the protein is extremely stable in a wide pH and temperature range and insensitive toward proteases.

The protein localises to the secreted. It localises to the target cell membrane. Functionally, antimicrobial peptide that acts against Gram-positive bacteria (Listeria spp., Enterococcus spp., B.subtilis, B.anthracis, P.aeruginosa). Is not active against Gram-negative bacteria. It selectively inhibits peptidoglycan biosynthesis through complex formation with the cell wall precursor lipid II (1:1 molar ratio), probably anchoring lipid II to the membrane, thus inhibiting cell wall synthesis. The interaction with lipid II involves the third position of the pentapeptide. Shows bactericidal activity at about 2-fold minimal inhibitory concentrations (MIC), but does not form pore across the membrane. In Coprinopsis cinerea (Inky cap fungus), this protein is Fungal defensin copsin.